The following is a 334-amino-acid chain: 6-phosphogluconolactonase (334 aa).

The protein belongs to the cycloisomerase 2 family.

The catalysed reaction is 6-phospho-D-glucono-1,5-lactone + H2O = 6-phospho-D-gluconate + H(+). It functions in the pathway carbohydrate degradation; pentose phosphate pathway; D-ribulose 5-phosphate from D-glucose 6-phosphate (oxidative stage): step 2/3. Its function is as follows. Catalyzes the hydrolysis of 6-phosphogluconolactone to 6-phosphogluconate. This Buchnera aphidicola subsp. Acyrthosiphon pisum (strain Tuc7) protein is 6-phosphogluconolactonase.